The sequence spans 419 residues: UDP-N-acetylglucosamine 1-carboxyvinyltransferase (419 aa).

22–23 (KN) contributes to the phosphoenolpyruvate binding site. A UDP-N-acetyl-alpha-D-glucosamine-binding site is contributed by Arg93. Cys117 acts as the Proton donor in catalysis. Position 117 is a 2-(S-cysteinyl)pyruvic acid O-phosphothioketal (Cys117). UDP-N-acetyl-alpha-D-glucosamine contacts are provided by residues 122–126 (RPVDL), Asp308, and Ile330.

Belongs to the EPSP synthase family. MurA subfamily.

It localises to the cytoplasm. The enzyme catalyses phosphoenolpyruvate + UDP-N-acetyl-alpha-D-glucosamine = UDP-N-acetyl-3-O-(1-carboxyvinyl)-alpha-D-glucosamine + phosphate. It functions in the pathway cell wall biogenesis; peptidoglycan biosynthesis. In terms of biological role, cell wall formation. Adds enolpyruvyl to UDP-N-acetylglucosamine. This is UDP-N-acetylglucosamine 1-carboxyvinyltransferase from Pseudomonas putida (Arthrobacter siderocapsulatus).